Reading from the N-terminus, the 325-residue chain is LIM and senescent cell antigen-like-containing domain protein 1 (325 aa).

Residue Ala2 is modified to N-acetylalanine. 5 consecutive LIM zinc-binding domains span residues 10–62, 71–121, 135–184, 193–243, and 252–303; these read CERC…CEHD, CHQC…CRPC, CQKC…CLPC, CGAC…CETH, and CFHC…CKKC.

As to quaternary structure, component of the heterotrimeric IPP (ILK-PINCH-PARVIN) complex composed of ILK, LIMS1/PINCH and PARVA; the complex binds to F-actin via the C-terminal tail of LIMS1 and the N-terminal region of PARVA, promoting F-actin filament bundling. Formation of the IPP complex is dependent on protein kinase C and precedes integrin-mediated cell adhesion and spreading. Competes with LIMS2 for interaction with ILK. Interacts (via LIM zinc-binding 5) with TGFB1I1. Interacts with SH3/SH2 adapter NCK2, thereby linking the complex to cell surface receptors. As to expression, expressed in most tissues except in the brain.

The protein localises to the cell junction. The protein resides in the focal adhesion. It is found in the cell membrane. Its function is as follows. Within the IPP (ILK-PINCH-PARVIN) complex, binds to F-actin, promoting F-actin bundling, a process required to generate force for actin cytoskeleton reorganization and subsequent dynamic cell adhesion events such as cell spreading and migration. The protein is LIM and senescent cell antigen-like-containing domain protein 1 (LIMS1) of Homo sapiens (Human).